Consider the following 402-residue polypeptide: Propionate kinase (402 aa).

Residues Asn-11 and Lys-18 each coordinate ATP. Asn-11 lines the Mg(2+) pocket. Arg-86 contributes to the substrate binding site. The Proton donor/acceptor role is filled by Asp-143. ATP-binding positions include His-175, 203–207 (HLGNG), 278–280 (DLR), and 326–330 (GIGEN).

The protein belongs to the acetokinase family. TdcD subfamily. Homodimer. The cofactor is Mg(2+).

The catalysed reaction is propanoate + ATP = propanoyl phosphate + ADP. Its pathway is amino-acid degradation; L-threonine degradation via propanoate pathway; propanoate from L-threonine: step 4/4. Catalyzes the conversion of propionyl phosphate and ADP to propionate and ATP. The chain is Propionate kinase from Edwardsiella piscicida.